A 148-amino-acid chain; its full sequence is Hut operon positive regulatory protein (148 aa).

Belongs to the HutP family. In terms of assembly, homohexamer.

Its function is as follows. Antiterminator that binds to cis-acting regulatory sequences on the mRNA in the presence of histidine, thereby suppressing transcription termination and activating the hut operon for histidine utilization. This is Hut operon positive regulatory protein from Bacillus velezensis (strain DSM 23117 / BGSC 10A6 / LMG 26770 / FZB42) (Bacillus amyloliquefaciens subsp. plantarum).